Consider the following 484-residue polypeptide: Glucan endo-1,3-beta-glucosidase 5 (484 aa).

Positions methionine 1 to glycine 26 are cleaved as a signal peptide. A glycan (N-linked (GlcNAc...) asparagine) is linked at asparagine 102. The active-site Proton donor is the glutamate 122. N-linked (GlcNAc...) asparagine glycosylation is found at asparagine 129 and asparagine 260. Catalysis depends on glutamate 267, which acts as the Nucleophile. Cysteine 366 and cysteine 428 are disulfide-bonded. The N-linked (GlcNAc...) asparagine glycan is linked to asparagine 409. Alanine 460 is lipidated: GPI-anchor amidated alanine. A propeptide spans serine 461–leucine 484 (removed in mature form).

Belongs to the glycosyl hydrolase 17 family. In terms of processing, contains two additional disulfide bonds.

Its subcellular location is the cell membrane. The catalysed reaction is Hydrolysis of (1-&gt;3)-beta-D-glucosidic linkages in (1-&gt;3)-beta-D-glucans.. The protein is Glucan endo-1,3-beta-glucosidase 5 of Arabidopsis thaliana (Mouse-ear cress).